The following is a 1135-amino-acid chain: uncharacterized protein (1135 aa).

The first 28 residues, 1–28 (MALFPRGILIALVLSFVLNLGLVTKIHA), serve as a signal peptide directing secretion. The next 7 membrane-spanning stretches (helical) occupy residues 332-352 (IVTA…LLAG), 359-379 (EYIN…GINI), 393-413 (MIQW…NWVM), 495-515 (MLVS…AFMV), 522-542 (MISI…FLFA), 555-575 (MISF…MFAV), and 700-720 (IKNI…MYNF).

This sequence belongs to the TrbL/VirB6 family.

The protein localises to the cell membrane. This is an uncharacterized protein from Rickettsia typhi (strain ATCC VR-144 / Wilmington).